A 418-amino-acid polypeptide reads, in one-letter code: Zinc metalloproteinase-disintegrin-like batroxstatin-2 (418 aa).

A Peptidase M12B domain is found at 10-206 (KYVKLVLVAD…DMPQCILEKP (197 aa)). Disulfide bonds link Cys121–Cys201, Cys161–Cys185, and Cys163–Cys168. Residue His146 coordinates Zn(2+). Glu147 is a catalytic residue. Positions 150 and 156 each coordinate Zn(2+). The region spanning 214 to 299 (PPVCGNYFVE…AECTDRFQRN (86 aa)) is the Disintegrin domain. Positions 216, 219, 221, 223, 226, and 229 each coordinate Ca(2+). 14 cysteine pairs are disulfide-bonded: Cys217–Cys246, Cys228–Cys241, Cys230–Cys236, Cys240–Cys263, Cys254–Cys260, Cys259–Cys285, Cys272–Cys292, Cys279–Cys310, Cys303–Cys315, Cys322–Cys372, Cys337–Cys383, Cys350–Cys360, Cys367–Cys409, and Cys403–Cys414. A D/ECD-tripeptide motif is present at residues 278–280 (ECD). Ca(2+) is bound by residues Asp280, Met281, Asp283, Asp294, and Arg295. Asn312 carries N-linked (GlcNAc...) asparagine glycosylation.

This sequence belongs to the venom metalloproteinase (M12B) family. P-III subfamily. P-IIIc sub-subfamily. Homodimer; disulfide-linked. Zn(2+) is required as a cofactor. In terms of tissue distribution, expressed by the venom gland.

It is found in the secreted. Functionally, snake venom zinc metalloprotease that induces apoptosis in vascular endothelial cells (VEC), without degrading the extracellular matrix (it cannot cleave collagen) or inhibiting adhesion of VEC. Has also fibrinogenolytic and hemorrhagic activities. The protein is Zinc metalloproteinase-disintegrin-like batroxstatin-2 of Bothrops atrox (Barba amarilla).